Consider the following 220-residue polypeptide: Vesicle-associated membrane protein 7 (220 aa).

N-acetylalanine is present on Ala-2. Residues 2–188 lie on the Cytoplasmic side of the membrane; that stretch reads AILFAVVARG…ARAMCMKNLK (187 aa). A Longin domain is found at 7–110; sequence VVARGTTILA…AMNSEFSSVL (104 aa). In terms of domain architecture, v-SNARE coiled-coil homology spans 125–185; it reads KVMETQAQVD…RNLARAMCMK (61 aa). Phosphoserine occurs at positions 167 and 168. A helical; Anchor for type IV membrane protein transmembrane segment spans residues 189-209; sequence LTIIIIIVSIVFIYIIVSPLC. Topologically, residues 210–220 are vesicular; that stretch reads GGFTWPSCVKK.

This sequence belongs to the synaptobrevin family. In terms of assembly, component of the SNARE complex composed of STX4, SNAP23 and VAMP7 that binds SYT7 during lysosomal exocytosis. Component of the SNARE complex composed of STX7, STX8, VAMP7 and VTI1B that is required for heterotypic fusion of late endosomes with lysosomes in liver cells. May interact with STX17. Interacts with PICALM. Interacts with RAB21.

Its subcellular location is the cytoplasmic vesicle. The protein resides in the secretory vesicle membrane. It is found in the golgi apparatus. The protein localises to the trans-Golgi network membrane. It localises to the late endosome membrane. Its subcellular location is the lysosome membrane. The protein resides in the endoplasmic reticulum membrane. It is found in the phagosome membrane. The protein localises to the synapse. It localises to the synaptosome. Its function is as follows. Involved in the targeting and/or fusion of transport vesicles to their target membrane during transport of proteins from the early endosome to the lysosome. Required for heterotypic fusion of late endosomes with lysosomes and homotypic lysosomal fusion. Required for calcium regulated lysosomal exocytosis. Involved in the export of chylomicrons from the endoplasmic reticulum to the cis Golgi. Required for exocytosis of mediators during eosinophil and neutrophil degranulation, and target cell killing by natural killer cells. Required for focal exocytosis of late endocytic vesicles during phagosome formation. This Pongo abelii (Sumatran orangutan) protein is Vesicle-associated membrane protein 7 (VAMP7).